Reading from the N-terminus, the 308-residue chain is Uricase-2 isozyme 1 (308 aa).

Active-site charge relay system residues include K17 and T63. The urate site is built by T63, D64, F165, R182, V237, Q238, and N264. The Charge relay system role is filled by H266. The short motif at S306–L308 is the Microbody targeting signal element.

The protein belongs to the uricase family.

It localises to the peroxisome. It carries out the reaction urate + O2 + H2O = 5-hydroxyisourate + H2O2. It participates in purine metabolism; urate degradation; (S)-allantoin from urate: step 1/3. Its function is as follows. Catalyzes the oxidation of uric acid to 5-hydroxyisourate, which is further processed to form (S)-allantoin. This is Uricase-2 isozyme 1 from Canavalia lineata (Beach bean).